A 216-amino-acid polypeptide reads, in one-letter code: MQSHLAPLACAAAAGRAGGSCQAAQPEDRRVLRYPGTAVMVTCPNRPLVPRPLLTPGGSRASLALCAFVAVPQRIPQPLLPAYILLMLPSLVVDMALPSSRLLRSIKPIQPASQVVRKERNPNPNCPQSDPLMKASSTSFLSHTYLINKTRSTTRKVEEHSWFTCTGAKYFAIPLAERNTKRLTKRSTHAQLLRGKQDGSEWVVPRSSASSNVLYH.

An N-terminal signal peptide occupies residues 1–23; that stretch reads MQSHLAPLACAAAAGRAGGSCQA. Asn-148 is a glycosylation site (N-linked (GlcNAc...) asparagine).

In terms of tissue distribution, ubiquitously expressed with higher expression in heart.

Its subcellular location is the secreted. The sequence is that of Putative cat eye syndrome critical region protein 9 (CECR9) from Homo sapiens (Human).